The chain runs to 493 residues: Glutamate--tRNA ligase (493 aa).

A 'HIGH' region motif is present at residues 10–20; sequence PSPTGDPHVGT. A 'KMSKS' region motif is present at residues 251–255; it reads KLSKR. Position 254 (K254) interacts with ATP.

It belongs to the class-I aminoacyl-tRNA synthetase family. Glutamate--tRNA ligase type 1 subfamily. As to quaternary structure, monomer.

The protein resides in the cytoplasm. It catalyses the reaction tRNA(Glu) + L-glutamate + ATP = L-glutamyl-tRNA(Glu) + AMP + diphosphate. Functionally, catalyzes the attachment of glutamate to tRNA(Glu) in a two-step reaction: glutamate is first activated by ATP to form Glu-AMP and then transferred to the acceptor end of tRNA(Glu). This chain is Glutamate--tRNA ligase, found in Pseudomonas putida (strain GB-1).